A 647-amino-acid chain; its full sequence is TNFAIP3-interacting protein 1 (647 aa).

Residues 39-72 (MQGIKMLGELLEESQMEASRLRQKAEELVKDSEL) adopt a coiled-coil conformation. Over residues 61-71 (QKAEELVKDSE) the composition is skewed to basic and acidic residues. A disordered region spans residues 61 to 168 (QKAEELVKDS…DLGPPPPEDS (108 aa)). Position 77 is a phosphoserine (serine 77). Residues 95 to 425 (TKVQVHPATS…SPLTRQREYQ (331 aa)) form an interaction with Nef region. Positions 102 to 115 (ATSTAATTTATATT) are enriched in low complexity. Over residues 143 to 155 (EEQNSPETGSHPT) the composition is skewed to polar residues. Positions 209–270 (SKVHKNEQRT…KKLLMNSSCK (62 aa)) form a coiled coil. A phosphoserine mark is found at serine 297, serine 416, and serine 455. Residues 311–551 (AAEKKVKLLE…KASGERYHME (241 aa)) are a coiled coil. The required for inhibitory activity of TNF-induced NF-kappa-B activation stretch occupies residues 444 to 601 (ASPSSPPAAF…MEHPPPHPNS (158 aa)). The tract at residues 465-523 (KQELVTQNELLKQQVKIFEEDFQRERSDRERMNEEKEELKKQVEKLQAQVTLTNAQLKT) is ubiquitin-binding domain (UBD). Residues 537 to 543 (QKRKAKA) carry the Nuclear localization signal motif. Tyrosine 565 is modified (phosphotyrosine). An Asymmetric dimethylarginine modification is found at arginine 584. At arginine 612 the chain carries Asymmetric dimethylarginine; alternate. Omega-N-methylarginine; alternate is present on arginine 612. Positions 613–647 (PPCAGIRNQSSQVMDPPPDRPAEPESADNDCDGPQ) are disordered. Positions 637-647 (ESADNDCDGPQ) are enriched in acidic residues. The residue at position 638 (serine 638) is a Phosphoserine.

As to quaternary structure, interacts with TNFAIP3 and IKBKG (polyubiquitinated); facilitates TNFAIP3-mediated de-ubiquitination of NEMO/IKBKG. Interacts with polyubiquitin. Interacts with MAPK1, SELPLG and PIK3CD. Interacts with IRAK1 (polyubiquitinated). Interacts with MYD88; the interaction is indicative for participation in an activated TLR-signaling complex. Interacts with TAX1BP1. Phosphorylation at Tyr-565 by SRC-family kinases recruits phosphoinositide-3-kinase (PI3K) PIK3CD:p85 heterodimer which results in integrin activation and leukocyte adhesion to activated endothelium during inflammation. Ubiquitous. Abundant in heart and skeletal muscle and expressed at lower levels in thymus, liver, kidney, brain and intestinal tract.

The protein localises to the cytoplasm. It localises to the nucleus. Its function is as follows. Inhibits NF-kappa-B activation and TNF-induced NF-kappa-B-dependent gene expression by regulating TAX1BP1 and A20/TNFAIP3-mediated deubiquitination of IKBKG; proposed to link A20/TNFAIP3 to ubiquitinated IKBKG. Involved in regulation of EGF-induced ERK1/ERK2 signaling pathway; blocks MAPK3/MAPK1 nuclear translocation and MAPK1-dependent transcription. Increases cell surface CD4(T4) antigen expression. Involved in the anti-inflammatory response of macrophages and positively regulates TLR-induced activation of CEBPB. Involved in the prevention of autoimmunity; this function implicates binding to polyubiquitin. Involved in leukocyte integrin activation during inflammation; this function is mediated by association with SELPLG and dependent on phosphorylation by SRC-family kinases. This chain is TNFAIP3-interacting protein 1 (Tnip1), found in Mus musculus (Mouse).